Here is a 523-residue protein sequence, read N- to C-terminus: Cytoplasmic dynein 1 light intermediate chain 1 (523 aa).

The segment at 1-25 is disordered; the sequence is MAAVGRVGSFGSSPPGLASTYASGP. 74–81 provides a ligand contact to ATP; sequence GEDGAGKT. 3 disordered regions span residues 200 to 219, 387 to 434, and 457 to 523; these read PGED…QEDR, PPTA…DPNM, and GSPG…GEAS. At serine 207 the chain carries Phosphoserine. A Phosphothreonine modification is found at threonine 213. Phosphoserine is present on residues serine 398 and serine 405. Position 408 is a phosphothreonine (threonine 408). 4 positions are modified to phosphoserine: serine 412, serine 419, serine 421, and serine 427. The span at 412-421 shows a compositional bias: low complexity; sequence SVSSNVASVS. Residues 458–473 are compositionally biased toward gly residues; the sequence is SPGGPGVGGSPGGGAA. Over residues 474–485 the composition is skewed to low complexity; the sequence is GASPSLPPSAKK. Residues serine 486 and serine 510 each carry the phosphoserine modification. Residues 506–523 are compositionally biased toward low complexity; sequence PASVSPTTPTSPTEGEAS. A phosphothreonine mark is found at threonine 512, threonine 513, and threonine 515. Serine 516 bears the Phosphoserine mark.

Belongs to the dynein light intermediate chain family. In terms of assembly, homodimer. The cytoplasmic dynein 1 complex consists of two catalytic heavy chains (HCs) and a number of non-catalytic subunits presented by intermediate chains (ICs), light intermediate chains (LICs) and light chains (LCs); the composition seems to vary in respect to the IC, LIC and LC composition. The heavy chain homodimer serves as a scaffold for the probable homodimeric assembly of the respective non-catalytic subunits. The ICs and LICs bind directly to the HC dimer and the LCs assemble on the IC dimer. Self-associates. Interacts with DYNC1H1; DYNC1LI1 and DYNC1LI2 bind mutually exclusive to DYNC1H1. Interacts with PCNT. Forms a complex with RAB11FIP3 and RAB11A1; the interaction between DYNC1LI1 and RAB11FIP3 is direct and induces DYNC1LI1 localization onto endosomal membrane; the complex regulates endocytic trafficking. Interacts with RUFY3. Phosphorylated during mitosis but not in interphase.

It is found in the cytoplasm. The protein resides in the chromosome. The protein localises to the centromere. Its subcellular location is the kinetochore. It localises to the cytoskeleton. It is found in the spindle pole. The protein resides in the recycling endosome membrane. In terms of biological role, acts as one of several non-catalytic accessory components of the cytoplasmic dynein 1 complex that are thought to be involved in linking dynein to cargos and to adapter proteins that regulate dynein function. Cytoplasmic dynein 1 acts as a motor for the intracellular retrograde motility of vesicles and organelles along microtubules. May play a role in binding dynein to membranous organelles or chromosomes. Probably involved in the microtubule-dependent transport of pericentrin. Is required for progress through the spindle assembly checkpoint. The phosphorylated form appears to be involved in the selective removal of MAD1L1 and MAD1L2 but not BUB1B from kinetochores. Forms a functional Rab11/RAB11FIP3/dynein complex onto endosomal membrane that regulates the movement of peripheral sorting endosomes (SE) along microtubule tracks toward the microtubule organizing center/centrosome, generating the endosomal recycling compartment (ERC). The protein is Cytoplasmic dynein 1 light intermediate chain 1 (Dync1li1) of Mus musculus (Mouse).